A 208-amino-acid chain; its full sequence is Protein-L-isoaspartate O-methyltransferase (208 aa).

S59 is a catalytic residue.

It belongs to the methyltransferase superfamily. L-isoaspartyl/D-aspartyl protein methyltransferase family.

It is found in the cytoplasm. The enzyme catalyses [protein]-L-isoaspartate + S-adenosyl-L-methionine = [protein]-L-isoaspartate alpha-methyl ester + S-adenosyl-L-homocysteine. Its function is as follows. Catalyzes the methyl esterification of L-isoaspartyl residues in peptides and proteins that result from spontaneous decomposition of normal L-aspartyl and L-asparaginyl residues. It plays a role in the repair and/or degradation of damaged proteins. The sequence is that of Protein-L-isoaspartate O-methyltransferase from Salmonella newport (strain SL254).